Here is a 243-residue protein sequence, read N- to C-terminus: Geranylgeranylglyceryl phosphate synthase (243 aa).

Residues D22 and S51 each coordinate Mg(2+). Sn-glycerol 1-phosphate is bound by residues 169 to 175 (YLEAGSG), 200 to 201 (GG), and 222 to 223 (GT).

It belongs to the GGGP/HepGP synthase family. Group II subfamily. Requires Mg(2+) as cofactor.

It is found in the cytoplasm. It catalyses the reaction sn-glycerol 1-phosphate + (2E,6E,10E)-geranylgeranyl diphosphate = sn-3-O-(geranylgeranyl)glycerol 1-phosphate + diphosphate. It functions in the pathway membrane lipid metabolism; glycerophospholipid metabolism. In terms of biological role, prenyltransferase that catalyzes the transfer of the geranylgeranyl moiety of geranylgeranyl diphosphate (GGPP) to the C3 hydroxyl of sn-glycerol-1-phosphate (G1P). This reaction is the first ether-bond-formation step in the biosynthesis of archaeal membrane lipids. This Methanosphaera stadtmanae (strain ATCC 43021 / DSM 3091 / JCM 11832 / MCB-3) protein is Geranylgeranylglyceryl phosphate synthase.